The primary structure comprises 396 residues: Elongation factor Tu (396 aa).

A tr-type G domain is found at 10–206 (KPHCNIGTIG…QVDAYIPQPE (197 aa)). The tract at residues 19–26 (GHVDHGKT) is G1. A GTP-binding site is contributed by 19–26 (GHVDHGKT). Position 26 (T26) interacts with Mg(2+). The tract at residues 60–64 (GITIS) is G2. Residues 81–84 (DCPG) form a G3 region. GTP-binding positions include 81–85 (DCPGH) and 136–139 (NKCD). Residues 136-139 (NKCD) form a G4 region. Positions 174-176 (SAL) are G5.

This sequence belongs to the TRAFAC class translation factor GTPase superfamily. Classic translation factor GTPase family. EF-Tu/EF-1A subfamily. In terms of assembly, monomer.

The protein localises to the cytoplasm. It catalyses the reaction GTP + H2O = GDP + phosphate + H(+). Its function is as follows. GTP hydrolase that promotes the GTP-dependent binding of aminoacyl-tRNA to the A-site of ribosomes during protein biosynthesis. The polypeptide is Elongation factor Tu (Rhodopseudomonas palustris (strain ATCC BAA-98 / CGA009)).